We begin with the raw amino-acid sequence, 249 residues long: DNA polymerase sliding clamp 1 (249 aa).

It belongs to the PCNA family. In terms of assembly, homotrimer. The subunits circularize to form a toroid; DNA passes through its center. Replication factor C (RFC) is required to load the toroid on the DNA. Interacts with TIP.

Its activity is regulated as follows. Inhibited by interaction with the PCNA inhibitor TIP. Sliding clamp subunit that acts as a moving platform for DNA processing. Responsible for tethering the catalytic subunit of DNA polymerase and other proteins to DNA during high-speed replication. This chain is DNA polymerase sliding clamp 1, found in Thermococcus kodakarensis (strain ATCC BAA-918 / JCM 12380 / KOD1) (Pyrococcus kodakaraensis (strain KOD1)).